Reading from the N-terminus, the 49-residue chain is Large ribosomal subunit protein bL33 (49 aa).

Belongs to the bacterial ribosomal protein bL33 family.

This Fervidobacterium nodosum (strain ATCC 35602 / DSM 5306 / Rt17-B1) protein is Large ribosomal subunit protein bL33.